Reading from the N-terminus, the 220-residue chain is Superoxide dismutase [Cu-Zn], chloroplastic (220 aa).

A chloroplast-targeting transit peptide spans 1-66; sequence MAAHCILFSS…AAPKPLTVFA (66 aa). Cu cation-binding residues include histidine 112, histidine 114, and histidine 129. An intrachain disulfide couples cysteine 123 to cysteine 212. Residues histidine 129, histidine 137, histidine 146, and aspartate 149 each coordinate Zn(2+). Histidine 186 contributes to the Cu cation binding site.

It belongs to the Cu-Zn superoxide dismutase family. As to quaternary structure, homotetramer. The cofactor is Cu cation. It depends on Zn(2+) as a cofactor.

The protein resides in the plastid. The protein localises to the chloroplast. It catalyses the reaction 2 superoxide + 2 H(+) = H2O2 + O2. Functionally, destroys radicals which are normally produced within the cells and which are toxic to biological systems. The polypeptide is Superoxide dismutase [Cu-Zn], chloroplastic (SODCP) (Solidago canadensis var. scabra (Tall goldenrod)).